The primary structure comprises 182 residues: Homeobox protein pnx (182 aa).

An important for interaction with tle3a region spans residues 1-34; sequence MHEETSNSTLQGKTSFSIADILDPAKFNGTRETR. The tract at residues 24-63 is disordered; the sequence is PAKFNGTRETREISNNRESPKTTSPTQDPSAPNIANASAA. Positions 29-43 are enriched in basic and acidic residues; it reads GTRETREISNNRESP. A compositionally biased stretch (low complexity) spans 52–63; sequence PSAPNIANASAA. A DNA-binding region (homeobox) is located at residues 67-126; the sequence is SKRIRTAFTLDQLRILERSFQSSHYLSVFERHCIASALGLSETQVKIWFQNRRTKWKKEL.

This sequence belongs to the NK-1 homeobox family. In terms of assembly, interacts with tle3a.

Its subcellular location is the nucleus. Functionally, transcriptional repressor. Activity as a repressor is enhanced by binding to the corepressor tle3a. This is Homeobox protein pnx from Danio rerio (Zebrafish).